Consider the following 206-residue polypeptide: LexA repressor (206 aa).

Positions Arg-28–Lys-48 form a DNA-binding region, H-T-H motif. Active-site for autocatalytic cleavage activity residues include Ser-123 and Lys-160.

It belongs to the peptidase S24 family. As to quaternary structure, homodimer.

It catalyses the reaction Hydrolysis of Ala-|-Gly bond in repressor LexA.. In terms of biological role, represses a number of genes involved in the response to DNA damage (SOS response), including recA and lexA. In the presence of single-stranded DNA, RecA interacts with LexA causing an autocatalytic cleavage which disrupts the DNA-binding part of LexA, leading to derepression of the SOS regulon and eventually DNA repair. The sequence is that of LexA repressor from Shewanella baltica (strain OS223).